A 453-amino-acid polypeptide reads, in one-letter code: UDP-N-acetylmuramoylalanine--D-glutamate ligase (453 aa).

117–123 (GSNGKST) contacts ATP.

This sequence belongs to the MurCDEF family.

The protein localises to the cytoplasm. The catalysed reaction is UDP-N-acetyl-alpha-D-muramoyl-L-alanine + D-glutamate + ATP = UDP-N-acetyl-alpha-D-muramoyl-L-alanyl-D-glutamate + ADP + phosphate + H(+). It participates in cell wall biogenesis; peptidoglycan biosynthesis. Functionally, cell wall formation. Catalyzes the addition of glutamate to the nucleotide precursor UDP-N-acetylmuramoyl-L-alanine (UMA). This is UDP-N-acetylmuramoylalanine--D-glutamate ligase from Chromobacterium violaceum (strain ATCC 12472 / DSM 30191 / JCM 1249 / CCUG 213 / NBRC 12614 / NCIMB 9131 / NCTC 9757 / MK).